The chain runs to 313 residues: GMP synthase [glutamine-hydrolyzing] subunit B (313 aa).

Positions 6–190 (KVWEKFIEEK…LGLPEKIYNR (185 aa)) constitute a GMPS ATP-PPase domain. 33–39 (SGGVDSS) provides a ligand contact to ATP.

Heterodimer composed of a glutamine amidotransferase subunit (A) and a GMP-binding subunit (B).

It catalyses the reaction XMP + L-glutamine + ATP + H2O = GMP + L-glutamate + AMP + diphosphate + 2 H(+). The protein operates within purine metabolism; GMP biosynthesis; GMP from XMP (L-Gln route): step 1/1. Functionally, catalyzes the synthesis of GMP from XMP. The sequence is that of GMP synthase [glutamine-hydrolyzing] subunit B (guaAB) from Pyrococcus furiosus (strain ATCC 43587 / DSM 3638 / JCM 8422 / Vc1).